A 264-amino-acid chain; its full sequence is Apolipoprotein A-I (264 aa).

The signal sequence occupies residues 1-18 (MKAVVLAVAVLFLTGSQA). 2 tandem repeats follow at residues 67-88 (LKLVDNWDTVGTTVGRLQEQLG) and 89-110 (PVTQEFWSNLEKDTDWLREEMN). Positions 67–264 (LKLVDNWDTV…DETSKRLSTQ (198 aa)) are 10 X approximate tandem repeats. At methionine 109 the chain carries Methionine sulfoxide. One copy of the 3; half-length repeat lies at 111–121 (KDLEEVKKQVQ). 3 consecutive repeat copies span residues 122-143 (PYLDQFQTKWQEEMEHYRQKVG), 144-165 (PLGAELREGARQKLQDLQERLV), and 166-187 (PVGEDIRDRMRTHVDALRSNLS). The stretch at 188–207 (PYSDKMRERLAQHLAKLKDS) is one 7; truncated repeat. Position 193 is a methionine sulfoxide (methionine 193). Copy 8 of the repeat occupies 208 to 229 (TTLAEYRTKASNHLQTLSEKAK). A 9; half-length repeat occupies 230–240 (PALEDLRQGLT). Repeat unit 10 spans residues 241 to 264 (PMLESFRATIMGWIDETSKRLSTQ). Position 242 is a methionine sulfoxide (methionine 242).

The protein belongs to the apolipoprotein A1/A4/E family. In terms of assembly, homodimer. Interacts with APOA1BP and CLU. Component of a sperm activating protein complex (SPAP), consisting of APOA1, an immunoglobulin heavy chain, an immunoglobulin light chain and albumin. Interacts with NDRG1. Interacts with SCGB3A2. Interacts with NAXE and YJEFN3. In terms of processing, glycosylated. Post-translationally, palmitoylated. Phosphorylation sites are present in the extracellular medium.

The protein resides in the secreted. In terms of biological role, participates in the reverse transport of cholesterol from tissues to the liver for excretion by promoting cholesterol efflux from tissues and by acting as a cofactor for the lecithin cholesterol acyltransferase (LCAT). As part of the SPAP complex, activates spermatozoa motility. This Peromyscus maniculatus bairdii (Prairie deer mouse) protein is Apolipoprotein A-I (Apoa1).